We begin with the raw amino-acid sequence, 515 residues long: MSKLGQEKNEVNYSDVREDRVVTNSTGNPINEPFVTQRIGEHGPLLLQDYNLIDSLAHFNRENIPQRNPHAHGSGAFGYFEVTDDITDICGSAMFSKIGKRTKCLTRFSTVGGDKGSADTVRDPRGFATKFYTEEGNLDWVYNNTPVFFIRDPSKFPHFIHTQKRNPQTNLRDADMFWDFLTTPENQVAIHQVMILFSDRGTPANYRSMHGYSGHTYKWSNKNGDWHYVQVHIKTDQGIKNLTIEEATKIAGSNPDYCQQDLFEAIQNGNYPSWTVYIQTMTERDAKKLPFSVFDLTKVWPQGQFPLRRVGKIVLNENPLNFFAQVEQAAFAPSTTVPYQEASADPVLQARLFSYADAHRYRLGPNFHQIPVNCPYASKFFNPAIRDGPMNVNGNFGSEPTYLANDKSYTYIQQDRPIQQHQEVWNGPAIPYHWATSPGDVDFVQARNLYRVLGKQPGQQKNLAYNIGIHVEGACPQIQQRVYDMFARVDKGLSEAIKKVAEAKHASELSSNSKF.

S2 carries the N-acetylserine modification. Active-site residues include H70 and N143. Y355 contacts heme. Positions S513–F515 match the Microbody targeting signal motif.

It belongs to the catalase family. As to quaternary structure, homotetramer. Heme serves as cofactor.

It localises to the peroxisome matrix. The enzyme catalyses 2 H2O2 = O2 + 2 H2O. Its function is as follows. Catalyzes the degradation of hydrogen peroxide (H(2)O(2)) generated by peroxisomal oxidases to water and oxygen, thereby protecting cells from the toxic effects of hydrogen peroxide. The protein is Peroxisomal catalase A (CTA1) of Saccharomyces cerevisiae (strain ATCC 204508 / S288c) (Baker's yeast).